The primary structure comprises 209 residues: Thiamine-phosphate synthase (209 aa).

Residues 36-40 and N68 each bind 4-amino-2-methyl-5-(diphosphooxymethyl)pyrimidine; that span reads QYRDK. Mg(2+) contacts are provided by D69 and D87. T106 is a 4-amino-2-methyl-5-(diphosphooxymethyl)pyrimidine binding site. 133 to 135 serves as a coordination point for 2-[(2R,5Z)-2-carboxy-4-methylthiazol-5(2H)-ylidene]ethyl phosphate; it reads SST. Position 136 (K136) interacts with 4-amino-2-methyl-5-(diphosphooxymethyl)pyrimidine. 2-[(2R,5Z)-2-carboxy-4-methylthiazol-5(2H)-ylidene]ethyl phosphate is bound at residue G163.

This sequence belongs to the thiamine-phosphate synthase family. It depends on Mg(2+) as a cofactor.

It carries out the reaction 2-[(2R,5Z)-2-carboxy-4-methylthiazol-5(2H)-ylidene]ethyl phosphate + 4-amino-2-methyl-5-(diphosphooxymethyl)pyrimidine + 2 H(+) = thiamine phosphate + CO2 + diphosphate. It catalyses the reaction 2-(2-carboxy-4-methylthiazol-5-yl)ethyl phosphate + 4-amino-2-methyl-5-(diphosphooxymethyl)pyrimidine + 2 H(+) = thiamine phosphate + CO2 + diphosphate. The enzyme catalyses 4-methyl-5-(2-phosphooxyethyl)-thiazole + 4-amino-2-methyl-5-(diphosphooxymethyl)pyrimidine + H(+) = thiamine phosphate + diphosphate. Its pathway is cofactor biosynthesis; thiamine diphosphate biosynthesis; thiamine phosphate from 4-amino-2-methyl-5-diphosphomethylpyrimidine and 4-methyl-5-(2-phosphoethyl)-thiazole: step 1/1. Condenses 4-methyl-5-(beta-hydroxyethyl)thiazole monophosphate (THZ-P) and 2-methyl-4-amino-5-hydroxymethyl pyrimidine pyrophosphate (HMP-PP) to form thiamine monophosphate (TMP). This is Thiamine-phosphate synthase from Pseudomonas aeruginosa (strain UCBPP-PA14).